Consider the following 297-residue polypeptide: Probable deoxyhypusine synthase (297 aa).

The Nucleophile role is filled by K265.

Belongs to the deoxyhypusine synthase family. Requires NAD(+) as cofactor.

It carries out the reaction [eIF5A protein]-L-lysine + spermidine = [eIF5A protein]-deoxyhypusine + propane-1,3-diamine. It participates in protein modification; eIF5A hypusination. Its function is as follows. Catalyzes the NAD-dependent oxidative cleavage of spermidine and the subsequent transfer of the butylamine moiety of spermidine to the epsilon-amino group of a specific lysine residue of the eIF-5A precursor protein to form the intermediate deoxyhypusine residue. The chain is Probable deoxyhypusine synthase from Methanopyrus kandleri (strain AV19 / DSM 6324 / JCM 9639 / NBRC 100938).